The primary structure comprises 474 residues: MRLSKTLADMDMADYSAALDPAYTTLEFENVQVLTMGNDTSPSEGANLNSSNSLGVSALCAICGDRATGKHYGASSCDGCKGFFRRSVRKNHMYSCRFSRQCVVDKDKRNQCRYCRLKKCFRAGMKKEAVQNERDRISTRRSSYEDSSLPSINALLQAEVLSQQITSPISGINGDIRAKKIANITDVCESMKEQLLVLVEWAKYIPAFCELLLDDQVALLRAHAGEHLLLGATKRSMVFKDVLLLGNDYIVPRHCPELAEMSRVSIRILDELVLPFQELQIDDNEYACLKAIIFFDPDAKGLSDPGKIKRLRSQVQVSLEDYINDRQYDSRGRFGELLLLLPTLQSITWQMIEQIQFIKLFGMAKIDNLLQEMLLGGSASDAPHAHHPLHPHLMQEHMGTNVIVANTMPSHLSNGQMCEWPRPRGQAATPETPQPSPPSGSGSESYKLLPGAITTIVKPPSAIPQPTITKQEAI.

Positions 57–132 (SALCAICGDR…AGMKKEAVQN (76 aa)) form a DNA-binding region, nuclear receptor. 2 NR C4-type zinc fingers span residues 60 to 80 (CAIC…CDGC) and 96 to 120 (CRFS…LKKC). Phosphoserine; by PKA is present on residues serine 142 and serine 143. The residue at position 144 (tyrosine 144) is a Phosphotyrosine. One can recognise an NR LBD domain in the interval 147 to 377 (SSLPSINALL…NLLQEMLLGG (231 aa)). The residue at position 166 (threonine 166) is a Phosphothreonine. Serine 167 carries the phosphoserine modification. Residues lysine 234 and lysine 307 each participate in a glycyl lysine isopeptide (Lys-Gly) (interchain with G-Cter in ubiquitin) cross-link. At serine 313 the chain carries Phosphoserine; by AMPK. A 9aaTAD motif is present at residues 368–376 (NLLQEMLLG). The segment at 413–450 (SNGQMCEWPRPRGQAATPETPQPSPPSGSGSESYKLLP) is disordered. A phosphothreonine mark is found at threonine 429 and threonine 432. The residue at position 436 (serine 436) is a Phosphoserine. Position 458 is an N6-acetyllysine (lysine 458).

The protein belongs to the nuclear hormone receptor family. NR2 subfamily. As to quaternary structure, homodimerization is required for HNF4-alpha to bind to its recognition site. Interacts with CLOCK, BMAL1, CRY1, CRY2, PER1 and PER2. Interacts with NR0B2/SHP; the resulting heterodimer is transcriptionally inactive. Interacts with DDX3X; this interaction disrupts the interaction between HNF4 and NR0B2 that forms inactive heterodimers and enhances the formation of active HNF4 homodimers. Phosphorylation at Ser-313 by AMPK reduces the ability to form homodimers and bind DNA. Phosphorylated in the recognition sequence R-R-S-S near the DNA-binding domain; phosphorylation results in decrease in DNA-binding activity. Phosphorylation of HNF4 depends on the diet and is decreased by a carbohydrate-rich diet and is increased by fasting. In terms of processing, the N-terminus is blocked. Post-translationally, acetylation at Lys-458 lowers transcriptional activation by about two-fold. Liver, kidney and intestine.

The protein localises to the nucleus. Functionally, transcriptional regulator which controls the expression of hepatic genes during the transition of endodermal cells to hepatic progenitor cells, facilitating the recruitment of RNA pol II to the promoters of target genes. Activates the transcription of CYP2C38. Represses the CLOCK-BMAL1 transcriptional activity and is essential for circadian rhythm maintenance and period regulation in the liver and colon cells. In Rattus norvegicus (Rat), this protein is Hepatocyte nuclear factor 4-alpha (Hnf4a).